The sequence spans 364 residues: tRNA 2-selenouridine synthase (364 aa).

The region spanning 14–137 is the Rhodanese domain; the sequence is LIADTPIIDV…LRQTAIQATI (124 aa). C97 functions as the S-selanylcysteine intermediate in the catalytic mechanism.

Belongs to the SelU family. Monomer.

The catalysed reaction is 5-methylaminomethyl-2-thiouridine(34) in tRNA + selenophosphate + (2E)-geranyl diphosphate + H2O + H(+) = 5-methylaminomethyl-2-selenouridine(34) in tRNA + (2E)-thiogeraniol + phosphate + diphosphate. It catalyses the reaction 5-methylaminomethyl-2-thiouridine(34) in tRNA + (2E)-geranyl diphosphate = 5-methylaminomethyl-S-(2E)-geranyl-thiouridine(34) in tRNA + diphosphate. The enzyme catalyses 5-methylaminomethyl-S-(2E)-geranyl-thiouridine(34) in tRNA + selenophosphate + H(+) = 5-methylaminomethyl-2-(Se-phospho)selenouridine(34) in tRNA + (2E)-thiogeraniol. It carries out the reaction 5-methylaminomethyl-2-(Se-phospho)selenouridine(34) in tRNA + H2O = 5-methylaminomethyl-2-selenouridine(34) in tRNA + phosphate. Involved in the post-transcriptional modification of the uridine at the wobble position (U34) of tRNA(Lys), tRNA(Glu) and tRNA(Gln). Catalyzes the conversion of 2-thiouridine (S2U-RNA) to 2-selenouridine (Se2U-RNA). Acts in a two-step process involving geranylation of 2-thiouridine (S2U) to S-geranyl-2-thiouridine (geS2U) and subsequent selenation of the latter derivative to 2-selenouridine (Se2U) in the tRNA chain. The sequence is that of tRNA 2-selenouridine synthase from Shigella boydii serotype 18 (strain CDC 3083-94 / BS512).